Here is a 126-residue protein sequence, read N- to C-terminus: Large ribosomal subunit protein bL17 (126 aa).

Belongs to the bacterial ribosomal protein bL17 family. Part of the 50S ribosomal subunit. Contacts protein L32.

The sequence is that of Large ribosomal subunit protein bL17 from Lysinibacillus sphaericus (strain C3-41).